The following is a 133-amino-acid chain: S-adenosylmethionine decarboxylase proenzyme (133 aa).

Serine 64 functions as the Schiff-base intermediate with substrate; via pyruvic acid in the catalytic mechanism. Residue serine 64 is modified to Pyruvic acid (Ser); by autocatalysis. The Proton acceptor; for processing activity role is filled by histidine 69. The active-site Proton donor; for catalytic activity is cysteine 84.

It belongs to the prokaryotic AdoMetDC family. Type 1 subfamily. As to quaternary structure, heterotetramer of two alpha and two beta chains arranged as a dimer of alpha/beta heterodimers. It depends on pyruvate as a cofactor. In terms of processing, is synthesized initially as an inactive proenzyme. Formation of the active enzyme involves a self-maturation process in which the active site pyruvoyl group is generated from an internal serine residue via an autocatalytic post-translational modification. Two non-identical subunits are generated from the proenzyme in this reaction, and the pyruvate is formed at the N-terminus of the alpha chain, which is derived from the carboxyl end of the proenzyme. The post-translation cleavage follows an unusual pathway, termed non-hydrolytic serinolysis, in which the side chain hydroxyl group of the serine supplies its oxygen atom to form the C-terminus of the beta chain, while the remainder of the serine residue undergoes an oxidative deamination to produce ammonia and the pyruvoyl group blocking the N-terminus of the alpha chain.

The enzyme catalyses S-adenosyl-L-methionine + H(+) = S-adenosyl 3-(methylsulfanyl)propylamine + CO2. It functions in the pathway amine and polyamine biosynthesis; S-adenosylmethioninamine biosynthesis; S-adenosylmethioninamine from S-adenosyl-L-methionine: step 1/1. Functionally, catalyzes the decarboxylation of S-adenosylmethionine to S-adenosylmethioninamine (dcAdoMet), the propylamine donor required for the synthesis of the polyamines spermine and spermidine from the diamine putrescine. The polypeptide is S-adenosylmethionine decarboxylase proenzyme (Sulfurihydrogenibium sp. (strain YO3AOP1)).